Reading from the N-terminus, the 515-residue chain is Glucose-6-phosphate 1-dehydrogenase (515 aa).

N-acetylalanine is present on Ala-2. At Ser-8 the chain carries Phosphoserine. A Phosphothreonine modification is found at Thr-10. NADP(+) contacts are provided by residues 38–45 and Arg-72; that span reads GASGDLAK. Lys-89 is subject to N6-acetyllysine. Tyr-147 and Lys-171 together coordinate NADP(+). Residues Lys-171, 201-205, Glu-239, and Asp-258 contribute to the D-glucose 6-phosphate site; that span reads HYLGK. Lys-171 is modified (N6-(2-hydroxyisobutyryl)lysine; alternate). Residue Lys-171 is modified to N6-acetyllysine; alternate. The Proton acceptor role is filled by His-263. Arg-357 provides a ligand contact to NADP(+). Residues Lys-360 and Arg-365 each contribute to the D-glucose 6-phosphate site. The NADP(+) site is built by Lys-366, Arg-370, and Arg-393. Residue Gln-395 coordinates D-glucose 6-phosphate. Residues 401–403 and 421–423 contribute to the NADP(+) site; these read YTK and DLT. At Lys-403 the chain carries N6-acetyllysine. Lys-432 bears the N6-acetyllysine mark. Arg-487 is an NADP(+) binding site. Lys-497 is subject to N6-acetyllysine. The NADP(+) site is built by Tyr-503 and Trp-509. Tyr-503 is modified (phosphotyrosine).

The protein belongs to the glucose-6-phosphate dehydrogenase family. Homotetramer; dimer of dimers. Interacts with SIRT2; the interaction is enhanced by H(2)O(2) treatment. Forms a ternary complex with ALDOB and TP53; this interaction is direct. ALDOB stabilizes the complex inhibiting G6PD activity and keeping oxidative pentose phosphate metabolism in check. Post-translationally, acetylated by ELP3 at Lys-403; acetylation inhibits its homodimerization and enzyme activity. Deacetylated by SIRT2 at Lys-403; deacetylation stimulates its enzyme activity.

Its subcellular location is the cytoplasm. The protein localises to the cytosol. It is found in the membrane. It carries out the reaction D-glucose 6-phosphate + NADP(+) = 6-phospho-D-glucono-1,5-lactone + NADPH + H(+). It participates in carbohydrate degradation; pentose phosphate pathway; D-ribulose 5-phosphate from D-glucose 6-phosphate (oxidative stage): step 1/3. Cytosolic glucose-6-phosphate dehydrogenase that catalyzes the first and rate-limiting step of the oxidative branch within the pentose phosphate pathway/shunt, an alternative route to glycolysis for the dissimilation of carbohydrates and a major source of reducing power and metabolic intermediates for fatty acid and nucleic acid biosynthetic processes. The polypeptide is Glucose-6-phosphate 1-dehydrogenase (G6PD) (Osphranter robustus (Wallaroo)).